Reading from the N-terminus, the 185-residue chain is Protein GrpE (185 aa).

Belongs to the GrpE family. In terms of assembly, homodimer.

The protein localises to the cytoplasm. Its function is as follows. Participates actively in the response to hyperosmotic and heat shock by preventing the aggregation of stress-denatured proteins, in association with DnaK and GrpE. It is the nucleotide exchange factor for DnaK and may function as a thermosensor. Unfolded proteins bind initially to DnaJ; upon interaction with the DnaJ-bound protein, DnaK hydrolyzes its bound ATP, resulting in the formation of a stable complex. GrpE releases ADP from DnaK; ATP binding to DnaK triggers the release of the substrate protein, thus completing the reaction cycle. Several rounds of ATP-dependent interactions between DnaJ, DnaK and GrpE are required for fully efficient folding. The sequence is that of Protein GrpE from Methanobrevibacter smithii (strain ATCC 35061 / DSM 861 / OCM 144 / PS).